The sequence spans 529 residues: Bifunctional purine biosynthesis protein PurH (529 aa).

The 148-residue stretch at 1-148 folds into the MGS-like domain; the sequence is MQQRRPIRRA…KNHKDVAIVV (148 aa).

Belongs to the PurH family.

The enzyme catalyses (6R)-10-formyltetrahydrofolate + 5-amino-1-(5-phospho-beta-D-ribosyl)imidazole-4-carboxamide = 5-formamido-1-(5-phospho-D-ribosyl)imidazole-4-carboxamide + (6S)-5,6,7,8-tetrahydrofolate. The catalysed reaction is IMP + H2O = 5-formamido-1-(5-phospho-D-ribosyl)imidazole-4-carboxamide. The protein operates within purine metabolism; IMP biosynthesis via de novo pathway; 5-formamido-1-(5-phospho-D-ribosyl)imidazole-4-carboxamide from 5-amino-1-(5-phospho-D-ribosyl)imidazole-4-carboxamide (10-formyl THF route): step 1/1. It functions in the pathway purine metabolism; IMP biosynthesis via de novo pathway; IMP from 5-formamido-1-(5-phospho-D-ribosyl)imidazole-4-carboxamide: step 1/1. This Yersinia pseudotuberculosis serotype O:1b (strain IP 31758) protein is Bifunctional purine biosynthesis protein PurH.